The following is a 63-amino-acid chain: Large ribosomal subunit protein bL32 (63 aa).

Residues 1 to 16 (MAVPKRKTSRMKRGFR) show a composition bias toward basic residues. The segment at 1–22 (MAVPKRKTSRMKRGFRRSADAI) is disordered.

It belongs to the bacterial ribosomal protein bL32 family.

The chain is Large ribosomal subunit protein bL32 from Beijerinckia indica subsp. indica (strain ATCC 9039 / DSM 1715 / NCIMB 8712).